Here is a 170-residue protein sequence, read N- to C-terminus: CCHC-type zinc finger nucleic acid binding protein (170 aa).

Position 2 is an N-acetylserine (serine 2). The segment at 4–21 (NECFKCGRSGHWARECPT) adopts a CCHC-type 1 zinc-finger fold. Residue lysine 8 is modified to N6-acetyllysine. Omega-N-methylarginine; by PRMT1 occurs at positions 25 and 27. An RNA-binding Arg/Gly-rich region (RGG-box) region spans residues 25-33 (RGRGMRSRG). Serine 42 carries the phosphoserine modification. CCHC-type zinc fingers lie at residues 45 to 62 (DICY…DCDL), 65 to 82 (DACY…DCKE), 89 to 106 (QCCY…DCDH), 110 to 127 (QKCY…DCTK), 128 to 145 (VKCY…NCSK), and 149 to 166 (VNCY…ECTI). Arginine 72 carries the omega-N-methylarginine modification.

Associates with the 40S ribosomal subunit, the 80S ribosome and with polysomes. Post-translationally, arginine methylation by PRMT1 in the Arg/Gly-rich region impedes RNA binding.

The protein resides in the nucleus. The protein localises to the cytoplasm. It is found in the endoplasmic reticulum. Functionally, single-stranded DNA-binding protein that preferentially binds to the sterol regulatory element (SRE) sequence 5'-GTGCGGTG-3', and thereby mediates transcriptional repression. Has a role as transactivator of the Myc promoter. Binds single-stranded RNA in a sequence-specific manner. Binds G-rich elements in target mRNA coding sequences. Prevents G-quadruplex structure formation in vitro, suggesting a role in supporting translation by resolving stable structures on mRNAs. The polypeptide is CCHC-type zinc finger nucleic acid binding protein (CNBP) (Bos taurus (Bovine)).